We begin with the raw amino-acid sequence, 438 residues long: Probable tRNA pseudouridine synthase D (438 aa).

D86 functions as the Nucleophile in the catalytic mechanism. The 226-residue stretch at 165-390 (GVPNFFGIQR…SKGTRRELLL (226 aa)) folds into the TRUD domain.

This sequence belongs to the pseudouridine synthase TruD family.

It catalyses the reaction uridine(13) in tRNA = pseudouridine(13) in tRNA. Functionally, could be responsible for synthesis of pseudouridine from uracil-13 in transfer RNAs. The sequence is that of Probable tRNA pseudouridine synthase D from Methanosarcina barkeri (strain Fusaro / DSM 804).